We begin with the raw amino-acid sequence, 228 residues long: Isoprenyl transferase (228 aa).

Residue Asp-15 is part of the active site. Asp-15 is a Mg(2+) binding site. Substrate-binding positions include 16–19 (GNGR), Trp-20, Arg-28, His-32, and 60–62 (STE). Asn-63 serves as the catalytic Proton acceptor. Residues Trp-64, Arg-66, Arg-176, and 182–184 (RLS) contribute to the substrate site. Glu-195 is a binding site for Mg(2+).

Belongs to the UPP synthase family. As to quaternary structure, homodimer. Mg(2+) serves as cofactor.

Functionally, catalyzes the condensation of isopentenyl diphosphate (IPP) with allylic pyrophosphates generating different type of terpenoids. The sequence is that of Isoprenyl transferase from Wolinella succinogenes (strain ATCC 29543 / DSM 1740 / CCUG 13145 / JCM 31913 / LMG 7466 / NCTC 11488 / FDC 602W) (Vibrio succinogenes).